The chain runs to 394 residues: Carbamoyl phosphate synthase small chain (394 aa).

Positions 1–188 (MIRKERAILA…ALPYAFPTLR (188 aa)) are CPSase. L-glutamine is bound by residues serine 49, glycine 240, and glycine 242. The Glutamine amidotransferase type-1 domain maps to 192–379 (RVVLMDFGIK…IEEIDAFDGG (188 aa)). Cysteine 267 (nucleophile) is an active-site residue. L-glutamine-binding residues include leucine 268, glutamine 271, asparagine 309, glycine 311, and tyrosine 312. Active-site residues include histidine 352 and glutamate 354.

Belongs to the CarA family. Composed of two chains; the small (or glutamine) chain promotes the hydrolysis of glutamine to ammonia, which is used by the large (or ammonia) chain to synthesize carbamoyl phosphate. Tetramer of heterodimers (alpha,beta)4.

The catalysed reaction is hydrogencarbonate + L-glutamine + 2 ATP + H2O = carbamoyl phosphate + L-glutamate + 2 ADP + phosphate + 2 H(+). It carries out the reaction L-glutamine + H2O = L-glutamate + NH4(+). Its pathway is amino-acid biosynthesis; L-arginine biosynthesis; carbamoyl phosphate from bicarbonate: step 1/1. The protein operates within pyrimidine metabolism; UMP biosynthesis via de novo pathway; (S)-dihydroorotate from bicarbonate: step 1/3. Its function is as follows. Small subunit of the glutamine-dependent carbamoyl phosphate synthetase (CPSase). CPSase catalyzes the formation of carbamoyl phosphate from the ammonia moiety of glutamine, carbonate, and phosphate donated by ATP, constituting the first step of 2 biosynthetic pathways, one leading to arginine and/or urea and the other to pyrimidine nucleotides. The small subunit (glutamine amidotransferase) binds and cleaves glutamine to supply the large subunit with the substrate ammonia. In Deinococcus radiodurans (strain ATCC 13939 / DSM 20539 / JCM 16871 / CCUG 27074 / LMG 4051 / NBRC 15346 / NCIMB 9279 / VKM B-1422 / R1), this protein is Carbamoyl phosphate synthase small chain.